The chain runs to 197 residues: Thymidylate kinase (197 aa).

7 to 14 is an ATP binding site; sequence GIDGSGKS.

It belongs to the thymidylate kinase family.

It carries out the reaction dTMP + ATP = dTDP + ADP. Functionally, phosphorylation of dTMP to form dTDP in both de novo and salvage pathways of dTTP synthesis. In Thermotoga maritima (strain ATCC 43589 / DSM 3109 / JCM 10099 / NBRC 100826 / MSB8), this protein is Thymidylate kinase (tmk).